Here is a 280-residue protein sequence, read N- to C-terminus: Formyltetrahydrofolate deformylase (280 aa).

In terms of domain architecture, ACT spans 8–86; it reads VLRTICPDQK…RELNPAGRRR (79 aa). Asp-225 is a catalytic residue.

This sequence belongs to the PurU family.

It catalyses the reaction (6R)-10-formyltetrahydrofolate + H2O = (6S)-5,6,7,8-tetrahydrofolate + formate + H(+). Its pathway is purine metabolism; IMP biosynthesis via de novo pathway; formate from 10-formyl-5,6,7,8-tetrahydrofolate: step 1/1. Functionally, catalyzes the hydrolysis of 10-formyltetrahydrofolate (formyl-FH4) to formate and tetrahydrofolate (FH4). The protein is Formyltetrahydrofolate deformylase of Escherichia coli O6:H1 (strain CFT073 / ATCC 700928 / UPEC).